The primary structure comprises 189 residues: Peptidyl-tRNA hydrolase (189 aa).

Residue tyrosine 15 participates in tRNA binding. Catalysis depends on histidine 20, which acts as the Proton acceptor. Positions 66, 68, and 114 each coordinate tRNA.

This sequence belongs to the PTH family. In terms of assembly, monomer.

It is found in the cytoplasm. The enzyme catalyses an N-acyl-L-alpha-aminoacyl-tRNA + H2O = an N-acyl-L-amino acid + a tRNA + H(+). Functionally, hydrolyzes ribosome-free peptidyl-tRNAs (with 1 or more amino acids incorporated), which drop off the ribosome during protein synthesis, or as a result of ribosome stalling. In terms of biological role, catalyzes the release of premature peptidyl moieties from peptidyl-tRNA molecules trapped in stalled 50S ribosomal subunits, and thus maintains levels of free tRNAs and 50S ribosomes. This chain is Peptidyl-tRNA hydrolase, found in Acidithiobacillus ferrooxidans (strain ATCC 23270 / DSM 14882 / CIP 104768 / NCIMB 8455) (Ferrobacillus ferrooxidans (strain ATCC 23270)).